We begin with the raw amino-acid sequence, 558 residues long: Potassium-transporting ATPase potassium-binding subunit (558 aa).

The next 11 membrane-spanning stretches (helical) occupy residues 1–21 (MDTL…VLIH), 59–79 (PAYL…VYGL), 85–105 (FLPY…NTAV), 130–150 (GLAV…IALV), 179–199 (LSLV…FAGF), 245–265 (PTAW…FSLP), 279–299 (TAIV…LTIF), 374–394 (GLYG…LLVG), 416–436 (ILVT…IPAV), 484–504 (ALGV…LALA), and 527–547 (FVGL…FPVL).

The protein belongs to the KdpA family. As to quaternary structure, the system is composed of three essential subunits: KdpA, KdpB and KdpC.

The protein resides in the cell membrane. Functionally, part of the high-affinity ATP-driven potassium transport (or Kdp) system, which catalyzes the hydrolysis of ATP coupled with the electrogenic transport of potassium into the cytoplasm. This subunit binds the extracellular potassium ions and delivers the ions to the membrane domain of KdpB through an intramembrane tunnel. This Clavibacter michiganensis subsp. michiganensis (strain NCPPB 382) protein is Potassium-transporting ATPase potassium-binding subunit.